The sequence spans 212 residues: uncharacterized protein (212 aa).

Helical transmembrane passes span 34-54 (IFGIVLVILSLPSALPIPAPG), 59-79 (FGVLIFLVAIQLMAGRQELWL), 126-146 (ILMGITVGSMAISMMIPIPGT), and 171-191 (AGMIFSVLIGVLMVSVIYVFF).

This sequence to R.meliloti ExoD.

It localises to the cell membrane. This is an uncharacterized protein from Synechocystis sp. (strain ATCC 27184 / PCC 6803 / Kazusa).